The chain runs to 338 residues: Heat-inducible transcription repressor HrcA (338 aa).

The protein belongs to the HrcA family.

Negative regulator of class I heat shock genes (grpE-dnaK-dnaJ and groELS operons). Prevents heat-shock induction of these operons. The sequence is that of Heat-inducible transcription repressor HrcA from Bacillus cereus (strain 03BB102).